The sequence spans 82 residues: Protein CYSTEINE-RICH TRANSMEMBRANE MODULE 13 (82 aa).

The disordered stretch occupies residues 1-58 (MYHQEQHPVGAPPPQGYPPKDGYPPAGYPPAGYPPPGYAQGYPAQGYPPPQYSQAPQQ). Residues 26–37 (AGYPPAGYPPPG) show a composition bias toward pro residues. Residues 59-76 (KQNAGMLEGCLAALCCCC) form a helical membrane-spanning segment.

This sequence belongs to the CYSTM1 family. As to quaternary structure, homodimer and heterodimers. Interacts with CYSTM7, CYTSM3, CYTSM4, CYTSM5, CYTSM6, CYTSM9, CYTSM10 and CYTSM11. Binds weakly to CYSTM1 and CYSTM2. Expressed in root meristem, root vasculature, leaf vasculature and floral organ primordia. Mostly expressed in roots and flowers and, to a lower extent, in stems, siliques and leaves.

It localises to the cell membrane. Its function is as follows. Required for the promotion of megasporogenesis, or promotion of germ cell formation from somatic precursor cells. Acts redundantly with WIH2. Functions in a genetic pathway downstream of SPL/NZZ and WUS and together with TRN2 in promoting megasporogenesis. Involved in resistance to abiotic stress. The protein is Protein CYSTEINE-RICH TRANSMEMBRANE MODULE 13 of Arabidopsis thaliana (Mouse-ear cress).